We begin with the raw amino-acid sequence, 362 residues long: S-adenosylmethionine:tRNA ribosyltransferase-isomerase (362 aa).

It belongs to the QueA family. Monomer.

The protein resides in the cytoplasm. It catalyses the reaction 7-aminomethyl-7-carbaguanosine(34) in tRNA + S-adenosyl-L-methionine = epoxyqueuosine(34) in tRNA + adenine + L-methionine + 2 H(+). Its pathway is tRNA modification; tRNA-queuosine biosynthesis. Functionally, transfers and isomerizes the ribose moiety from AdoMet to the 7-aminomethyl group of 7-deazaguanine (preQ1-tRNA) to give epoxyqueuosine (oQ-tRNA). This Syntrophus aciditrophicus (strain SB) protein is S-adenosylmethionine:tRNA ribosyltransferase-isomerase.